The following is a 79-amino-acid chain: uncharacterized protein (79 aa).

A signal peptide spans 1 to 33; that stretch reads MRLIIRAIVLLALVWIGLLMSGYGILVGSKVNA.

This is an uncharacterized protein from Salmonella typhi.